Consider the following 243-residue polypeptide: uncharacterized protein (243 aa).

This is an uncharacterized protein from Caenorhabditis elegans.